We begin with the raw amino-acid sequence, 314 residues long: Transcription factor TCP20 (314 aa).

2 disordered regions span residues 1-91 (MDPK…RGRR) and 295-314 (NHEE…GSGR). Basic and acidic residues-rich tracts occupy residues 38-49 (DENRKPTTEIKD) and 77-89 (SNKD…EGRG). The TCP domain occupies 78–132 (NKDRHTKVEGRGRRIRMPALCAARIFQLTRELGHKSDGETIQWLLQQAEPSIIAA).

In terms of assembly, interacts with PURA1. Interacts with SPL.

It localises to the nucleus. Transcription factor that binds to the site II motif (3'-TGGGCC/T-5') in the promoter of PCNA-2 and to 3'-GCCCG/A-5' elements in the promoters of cyclin CYCB1-1 and ribosomal protein genes. This chain is Transcription factor TCP20 (TCP20), found in Arabidopsis thaliana (Mouse-ear cress).